The following is a 338-amino-acid chain: Ketol-acid reductoisomerase (NADP(+)) (338 aa).

The KARI N-terminal Rossmann domain occupies 1-181 (MRVFYDKDCD…GGGRTGIIET (181 aa)). Residues 24 to 27 (YGSQ), arginine 47, serine 50, threonine 52, and 82 to 85 (DEFQ) each bind NADP(+). The active site involves histidine 107. Glycine 133 lines the NADP(+) pocket. The 146-residue stretch at 182–327 (TFKDETETDL…EKLRAMMPWI (146 aa)) folds into the KARI C-terminal knotted domain. Mg(2+)-binding residues include aspartate 190, glutamate 194, glutamate 226, and glutamate 230. Serine 251 contributes to the substrate binding site.

Belongs to the ketol-acid reductoisomerase family. It depends on Mg(2+) as a cofactor.

It carries out the reaction (2R)-2,3-dihydroxy-3-methylbutanoate + NADP(+) = (2S)-2-acetolactate + NADPH + H(+). It catalyses the reaction (2R,3R)-2,3-dihydroxy-3-methylpentanoate + NADP(+) = (S)-2-ethyl-2-hydroxy-3-oxobutanoate + NADPH + H(+). The protein operates within amino-acid biosynthesis; L-isoleucine biosynthesis; L-isoleucine from 2-oxobutanoate: step 2/4. It participates in amino-acid biosynthesis; L-valine biosynthesis; L-valine from pyruvate: step 2/4. Functionally, involved in the biosynthesis of branched-chain amino acids (BCAA). Catalyzes an alkyl-migration followed by a ketol-acid reduction of (S)-2-acetolactate (S2AL) to yield (R)-2,3-dihydroxy-isovalerate. In the isomerase reaction, S2AL is rearranged via a Mg-dependent methyl migration to produce 3-hydroxy-3-methyl-2-ketobutyrate (HMKB). In the reductase reaction, this 2-ketoacid undergoes a metal-dependent reduction by NADPH to yield (R)-2,3-dihydroxy-isovalerate. The chain is Ketol-acid reductoisomerase (NADP(+)) from Pseudomonas aeruginosa (strain LESB58).